Consider the following 1062-residue polypeptide: Carbamoyl phosphate synthase large chain (1062 aa).

Residues 1–401 (MPKRTDIHKI…AMQKAVQSLE (401 aa)) are carboxyphosphate synthetic domain. Residues Arg129, Arg169, Gly175, Gly176, Lys208, Ile210, Glu215, Gly241, Ile242, His243, Gln284, and Glu298 each coordinate ATP. In terms of domain architecture, ATP-grasp 1 spans 133–327 (KELCQKLGEP…IAKMAAKIAI (195 aa)). 3 residues coordinate Mg(2+): Gln284, Glu298, and Asn300. Gln284, Glu298, and Asn300 together coordinate Mn(2+). Positions 402 to 546 (IDEKDLYSAK…YSTYDGENES (145 aa)) are oligomerization domain. A carbamoyl phosphate synthetic domain region spans residues 547 to 929 (RKSGKKSVIV…ALYKAFAGAK (383 aa)). The region spanning 671-861 (DQIIKSLHLH…MAQVATRVIM (191 aa)) is the ATP-grasp 2 domain. 10 residues coordinate ATP: Arg707, Asp746, Leu748, Glu752, Gly777, Val778, His779, Ser780, Gln820, and Glu832. Mg(2+) contacts are provided by Gln820, Glu832, and Asn834. 3 residues coordinate Mn(2+): Gln820, Glu832, and Asn834. One can recognise an MGS-like domain in the interval 930–1062 (MQLPENGNVL…NRSFATDALK (133 aa)). Residues 930 to 1062 (MQLPENGNVL…NRSFATDALK (133 aa)) are allosteric domain.

The protein belongs to the CarB family. In terms of assembly, composed of two chains; the small (or glutamine) chain promotes the hydrolysis of glutamine to ammonia, which is used by the large (or ammonia) chain to synthesize carbamoyl phosphate. Tetramer of heterodimers (alpha,beta)4. It depends on Mg(2+) as a cofactor. Mn(2+) is required as a cofactor.

The catalysed reaction is hydrogencarbonate + L-glutamine + 2 ATP + H2O = carbamoyl phosphate + L-glutamate + 2 ADP + phosphate + 2 H(+). The enzyme catalyses hydrogencarbonate + NH4(+) + 2 ATP = carbamoyl phosphate + 2 ADP + phosphate + 2 H(+). It participates in amino-acid biosynthesis; L-arginine biosynthesis; carbamoyl phosphate from bicarbonate: step 1/1. Its pathway is pyrimidine metabolism; UMP biosynthesis via de novo pathway; (S)-dihydroorotate from bicarbonate: step 1/3. Large subunit of the glutamine-dependent carbamoyl phosphate synthetase (CPSase). CPSase catalyzes the formation of carbamoyl phosphate from the ammonia moiety of glutamine, carbonate, and phosphate donated by ATP, constituting the first step of 2 biosynthetic pathways, one leading to arginine and/or urea and the other to pyrimidine nucleotides. The large subunit (synthetase) binds the substrates ammonia (free or transferred from glutamine from the small subunit), hydrogencarbonate and ATP and carries out an ATP-coupled ligase reaction, activating hydrogencarbonate by forming carboxy phosphate which reacts with ammonia to form carbamoyl phosphate. The polypeptide is Carbamoyl phosphate synthase large chain (Lactobacillus helveticus (strain DPC 4571)).